The chain runs to 71 residues: Allergen Art v 2 (71 aa).

In terms of processing, glycosylated. High-mannose oligosaccharides (Man(5-9)GlcNAc(2)).

This Artemisia vulgaris (Mugwort) protein is Allergen Art v 2.